We begin with the raw amino-acid sequence, 314 residues long: 2,3-dihydroxyphenylpropionate/2,3-dihydroxicinnamic acid 1,2-dioxygenase (314 aa).

His-115 functions as the Proton donor in the catalytic mechanism. His-179 (proton acceptor) is an active-site residue.

The protein belongs to the LigB/MhpB extradiol dioxygenase family. As to quaternary structure, homotetramer. It depends on Fe(2+) as a cofactor.

The catalysed reaction is 3-(2,3-dihydroxyphenyl)propanoate + O2 = (2Z,4E)-2-hydroxy-6-oxonona-2,4-dienedioate + H(+). It catalyses the reaction (2E)-3-(2,3-dihydroxyphenyl)prop-2-enoate + O2 = (2Z,4E,7E)-2-hydroxy-6-oxonona-2,4,7-trienedioate + H(+). Its pathway is aromatic compound metabolism; 3-phenylpropanoate degradation. Its function is as follows. Catalyzes the non-heme iron(II)-dependent oxidative cleavage of 2,3-dihydroxyphenylpropionic acid and 2,3-dihydroxicinnamic acid into 2-hydroxy-6-ketononadienedioate and 2-hydroxy-6-ketononatrienedioate, respectively. The polypeptide is 2,3-dihydroxyphenylpropionate/2,3-dihydroxicinnamic acid 1,2-dioxygenase (Rhodococcus globerulus).